Consider the following 224-residue polypeptide: Peroxiredoxin-like 2A (224 aa).

Residues 14 to 112 (MWSVGLGAVG…SKLGVPLYAV (99 aa)) are thioredoxin fold. U85 is a non-standard amino acid (selenocysteine). The Redox-active role is filled by C88.

Belongs to the peroxiredoxin-like PRXL2 family. PRXL2A subfamily.

Its subcellular location is the cytoplasm. In terms of biological role, involved in redox regulation of the cell. Acts as an antioxidant. Inhibits TNFSF11-induced NFKB1 and JUN activation and osteoclast differentiation. May affect bone resorption and help to maintain bone mass. The sequence is that of Peroxiredoxin-like 2A (PRXL2A) from Gallus gallus (Chicken).